The primary structure comprises 505 residues: ATP synthase subunit alpha (505 aa).

An ATP-binding site is contributed by 170–177; that stretch reads GDRQTGKS.

The protein belongs to the ATPase alpha/beta chains family. F-type ATPases have 2 components, CF(1) - the catalytic core - and CF(0) - the membrane proton channel. CF(1) has five subunits: alpha(3), beta(3), gamma(1), delta(1), epsilon(1). CF(0) has four main subunits: a(1), b(1), b'(1) and c(9-12).

The protein resides in the cellular thylakoid membrane. It carries out the reaction ATP + H2O + 4 H(+)(in) = ADP + phosphate + 5 H(+)(out). Functionally, produces ATP from ADP in the presence of a proton gradient across the membrane. The alpha chain is a regulatory subunit. This is ATP synthase subunit alpha from Prochlorococcus marinus (strain MIT 9215).